The sequence spans 135 residues: UPF0738 protein Aflv_2116 (135 aa).

Belongs to the UPF0738 family.

This is UPF0738 protein Aflv_2116 from Anoxybacillus flavithermus (strain DSM 21510 / WK1).